Reading from the N-terminus, the 119-residue chain is Immunoglobulin heavy variable 3-49 (119 aa).

The N-terminal stretch at 1–19 (MEFGLSWVFLVAILKGVQC) is a signal peptide. The segment at 20–44 (EVQLVESGGGLVQPGRSLRLSCTAS) is framework-1. The 100-residue stretch at 20–119 (EVQLVESGGG…EDTAVYYCTR (100 aa)) folds into the Ig-like domain. Cys41 and Cys117 are oxidised to a cystine. Positions 45 to 52 (GFTFGDYA) are complementarity-determining-1. The tract at residues 53 to 69 (MSWVRQAPGKGLEWVGF) is framework-2. The complementarity-determining-2 stretch occupies residues 70–79 (IRSKAYGGTT). Residues 80 to 117 (EYAASVKGRFTISRDDSKSIAYLQMNSLKTEDTAVYYC) form a framework-3 region. The interval 118–119 (TR) is complementarity-determining-3.

Immunoglobulins are composed of two identical heavy chains and two identical light chains; disulfide-linked.

The protein resides in the secreted. Its subcellular location is the cell membrane. In terms of biological role, v region of the variable domain of immunoglobulin heavy chains that participates in the antigen recognition. Immunoglobulins, also known as antibodies, are membrane-bound or secreted glycoproteins produced by B lymphocytes. In the recognition phase of humoral immunity, the membrane-bound immunoglobulins serve as receptors which, upon binding of a specific antigen, trigger the clonal expansion and differentiation of B lymphocytes into immunoglobulins-secreting plasma cells. Secreted immunoglobulins mediate the effector phase of humoral immunity, which results in the elimination of bound antigens. The antigen binding site is formed by the variable domain of one heavy chain, together with that of its associated light chain. Thus, each immunoglobulin has two antigen binding sites with remarkable affinity for a particular antigen. The variable domains are assembled by a process called V-(D)-J rearrangement and can then be subjected to somatic hypermutations which, after exposure to antigen and selection, allow affinity maturation for a particular antigen. The polypeptide is Immunoglobulin heavy variable 3-49 (Homo sapiens (Human)).